The sequence spans 103 residues: Small ribosomal subunit protein uS10 (103 aa).

The protein belongs to the universal ribosomal protein uS10 family. As to quaternary structure, part of the 30S ribosomal subunit.

Functionally, involved in the binding of tRNA to the ribosomes. This chain is Small ribosomal subunit protein uS10, found in Cellvibrio japonicus (strain Ueda107) (Pseudomonas fluorescens subsp. cellulosa).